We begin with the raw amino-acid sequence, 720 residues long: Engulfment and cell motility protein 2 (720 aa).

A Phosphotyrosine modification is found at Tyr48. The ELMO domain occupies 311–485 (AQRDIIFELR…VVREQITRAL (175 aa)). Ser503 is modified (phosphoserine). Residues 553-674 (SSFRKIGNRR…LLGKDMSSEL (122 aa)) form the PH domain. The SH3-binding motif lies at 700–707 (PEAPPPIP). At Tyr717 the chain carries Phosphotyrosine.

Interacts with the SH3-domain of DOCK1 via its SH3-binding site. Probably part of a complex with DOCK1 and RAC1. Probably part of a complex with DOCK1 and CRK isoform CRK-II. Interacts with ARHGEF16, DOCK4 and EPHA2; mediates activation of RAC1 by EPHA2. Interacts with ADGRB3. Interacts with AUTS2; the interaction is direct. As to expression, widely expressed, with a higher expression in skeletal muscle, kidney and placenta.

It localises to the cytoplasm. The protein localises to the cytosol. It is found in the membrane. Involved in cytoskeletal rearrangements required for phagocytosis of apoptotic cells and cell motility. Acts in association with DOCK1 and CRK. Was initially proposed to be required in complex with DOCK1 to activate Rac Rho small GTPases. May enhance the guanine nucleotide exchange factor (GEF) activity of DOCK1. The sequence is that of Engulfment and cell motility protein 2 (ELMO2) from Homo sapiens (Human).